Here is a 685-residue protein sequence, read N- to C-terminus: Protein SPT2 homolog (685 aa).

The interval 1–570 (MDFREILMIA…PPLSGYRAAQ (570 aa)) is important for interaction with DNA. Lysine 37 participates in a covalent cross-link: Glycyl lysine isopeptide (Lys-Gly) (interchain with G-Cter in SUMO2). Positions 45–81 (QAFLKRKEEELRRKALEEKRRKEELVKKRIELKHDKK) form a coiled coil. The segment at 79–168 (DKKARAMAKR…PLKSAPPPMN (90 aa)) is disordered. The span at 101–111 (IEEKSKKRQAT) shows a compositional bias: basic and acidic residues. Residues 123-148 (YEMEEENEFLEYNHAESEQEYEEEQE) are a coiled coil. Residue lysine 187 forms a Glycyl lysine isopeptide (Lys-Gly) (interchain with G-Cter in SUMO2) linkage. Basic and acidic residues-rich tracts occupy residues 188 to 209 (VVKK…EFLE) and 260 to 275 (HAEK…EKHL). 2 disordered regions span residues 188–615 (VVKK…QEEI) and 644–685 (SWKE…LKRR). Phosphoserine is present on serine 278. 3 stretches are compositionally biased toward low complexity: residues 317 to 330 (SSTS…TSAS), 365 to 385 (SPGV…PSTG), and 402 to 415 (GSSS…ISGS). Positions 416-431 (KKPTNDSNPSRRTVSG) are enriched in polar residues. Residues 435–501 (PGQPASSSGG…PGRSISGSIP (67 aa)) are compositionally biased toward low complexity. Serine 471 is subject to Phosphoserine. Positions 519 to 529 (GPGQTVSSSGP) are enriched in polar residues. The segment covering 542 to 553 (ISSKNIISRSSN) has biased composition (low complexity). Residues 571-685 (GPQRLPFPTG…RRRAKKLKRR (115 aa)) are important for interaction with histones. An N6-acetyllysine modification is found at lysine 582. A compositionally biased stretch (acidic residues) spans 587 to 613 (YEEEDDDDDEYDSEMEDFIEDEGEPQE). Serine 599 is modified (phosphoserine). 2 stretches are compositionally biased toward basic and acidic residues: residues 644–655 (SWKEQQKEEAKS) and 666–676 (EMRREEEEMQR). Residues 645-685 (WKEQQKEEAKSLRLGMQEDLEEMRREEEEMQRRRAKKLKRR) adopt a coiled-coil conformation.

Belongs to the SPT2 family. Interacts with histones. Interacts with a heterotetrameric complex formed by histone H3 and H4, especially when the histone tetramer is not bound to DNA. Interacts with histone H3.3.

It localises to the nucleus. It is found in the nucleolus. Its function is as follows. Histone chaperone that stabilizes pre-existing histone tetramers and regulates replication-independent histone exchange on chromatin. Required for normal chromatin refolding in the coding region of transcribed genes, and for the suppression of spurious transcription. Binds DNA and histones and promotes nucleosome assembly (in vitro). Facilitates formation of tetrameric histone complexes containing histone H3 and H4. Modulates RNA polymerase 1-mediated transcription. Binds DNA, with a preference for branched DNA species, such as Y-form DNA and Holliday junction DNA. This chain is Protein SPT2 homolog (SPTY2D1), found in Homo sapiens (Human).